The primary structure comprises 432 residues: Glutamate-1-semialdehyde 2,1-aminomutase 1 (432 aa).

The residue at position 272 (Lys-272) is an N6-(pyridoxal phosphate)lysine.

The protein belongs to the class-III pyridoxal-phosphate-dependent aminotransferase family. HemL subfamily. As to quaternary structure, homodimer. The cofactor is pyridoxal 5'-phosphate.

It localises to the cytoplasm. The catalysed reaction is (S)-4-amino-5-oxopentanoate = 5-aminolevulinate. It participates in porphyrin-containing compound metabolism; protoporphyrin-IX biosynthesis; 5-aminolevulinate from L-glutamyl-tRNA(Glu): step 2/2. The protein is Glutamate-1-semialdehyde 2,1-aminomutase 1 of Exiguobacterium sibiricum (strain DSM 17290 / CCUG 55495 / CIP 109462 / JCM 13490 / 255-15).